Here is a 314-residue protein sequence, read N- to C-terminus: Protoheme IX farnesyltransferase (314 aa).

7 consecutive transmembrane segments (helical) span residues Leu58 to Phe78, Ala107 to Val127, Leu130 to Leu150, Trp173 to Phe193, Val227 to Pro247, Val248 to Leu268, and Ser294 to Gly314.

The protein belongs to the UbiA prenyltransferase family. Protoheme IX farnesyltransferase subfamily.

It is found in the cell membrane. It catalyses the reaction heme b + (2E,6E)-farnesyl diphosphate + H2O = Fe(II)-heme o + diphosphate. The protein operates within porphyrin-containing compound metabolism; heme O biosynthesis; heme O from protoheme: step 1/1. Its function is as follows. Converts heme B (protoheme IX) to heme O by substitution of the vinyl group on carbon 2 of heme B porphyrin ring with a hydroxyethyl farnesyl side group. This Nocardioides sp. (strain ATCC BAA-499 / JS614) protein is Protoheme IX farnesyltransferase.